A 236-amino-acid polypeptide reads, in one-letter code: Peroxisomal membrane protein PMP27 (236 aa).

The protein belongs to the peroxin-11 family. As to quaternary structure, homooligomer. Interacts with PEX34.

Its subcellular location is the peroxisome membrane. Its function is as follows. Involved in peroxisomal proliferation. Promotes peroxisome division and biogenesis. This chain is Peroxisomal membrane protein PMP27 (PEX11), found in Saccharomyces cerevisiae (strain ATCC 204508 / S288c) (Baker's yeast).